Reading from the N-terminus, the 105-residue chain is Keratin-associated protein 17-1 (105 aa).

As to quaternary structure, interacts with hair keratins.

In terms of biological role, in the hair cortex, hair keratin intermediate filaments are embedded in an interfilamentous matrix, consisting of hair keratin-associated proteins (KRTAP), which are essential for the formation of a rigid and resistant hair shaft through their extensive disulfide bond cross-linking with abundant cysteine residues of hair keratins. The matrix proteins include the high-sulfur and high-glycine-tyrosine keratins. This Homo sapiens (Human) protein is Keratin-associated protein 17-1 (KRTAP17-1).